The sequence spans 606 residues: Sporulation kinase A (606 aa).

Residues 3–73 (QDTQHVKPLQ…SYFYNEHHLM (71 aa)) enclose the PAS 1 domain. Residues 77–116 (FRFIKKDHTIVWVEAAVEIVTTRAERTEREIILKMKVLEE) form the PAC 1 domain. The region spanning 140–214 (YITDDYERLV…IRMQKGMEVG (75 aa)) is the PAS 2 domain. Positions 218 to 255 (QTWKRLDGTPVHLEVKASPTVYKNQQAELLLLIDISSR) constitute a PAC 2 domain. One can recognise a PAS 3 domain in the interval 265–335 (SRERYQLLIQ…ERIQNIAEQK (71 aa)). The Histidine kinase domain maps to 402–606 (GIAHEIRNPL…TAFKISFPKK (205 aa)). His405 is subject to Phosphohistidine; by autocatalysis.

The catalysed reaction is ATP + protein L-histidine = ADP + protein N-phospho-L-histidine.. In terms of biological role, phosphorylates the sporulation-regulatory proteins spo0A and spo0F. It also autophosphorylates in the presence of ATP. The polypeptide is Sporulation kinase A (kinA) (Bacillus subtilis (strain 168)).